We begin with the raw amino-acid sequence, 217 residues long: LexA repressor (217 aa).

Positions 28–48 form a DNA-binding region, H-T-H motif; sequence RAEIAAEFGFSSPNAAEEHLR. Catalysis depends on for autocatalytic cleavage activity residues Ser136 and Lys173.

This sequence belongs to the peptidase S24 family. In terms of assembly, homodimer.

It carries out the reaction Hydrolysis of Ala-|-Gly bond in repressor LexA.. Functionally, represses a number of genes involved in the response to DNA damage (SOS response), including recA and lexA. In the presence of single-stranded DNA, RecA interacts with LexA causing an autocatalytic cleavage which disrupts the DNA-binding part of LexA, leading to derepression of the SOS regulon and eventually DNA repair. The protein is LexA repressor of Cupriavidus taiwanensis (strain DSM 17343 / BCRC 17206 / CCUG 44338 / CIP 107171 / LMG 19424 / R1) (Ralstonia taiwanensis (strain LMG 19424)).